The following is a 1298-amino-acid chain: Activating molecule in BECN1-regulated autophagy protein 1 (1298 aa).

The segment at 1–22 is interaction with DDB1; the sequence is MKVVPEKNAVRILWGRERGARA. Lys45 is covalently cross-linked (Glycyl lysine isopeptide (Lys-Gly) (interchain with G-Cter in ubiquitin)). WD repeat units lie at residues 51–90, 93–133, and 135–175; these read DSPRSTFLLAFSPDRTLLASTHVNHNIYITEVKTGKCVHS, GHRR…ESWF, and DSNN…AVVK. Ser52 is subject to Phosphoserine; by MTOR. A compositionally biased stretch (polar residues) spans 254–266; the sequence is IQVGEQSTVQDSA. The segment at 254–284 is disordered; sequence IQVGEQSTVQDSATPSPPPPPPQPSTERPRT. Residues 268–277 show a composition bias toward pro residues; the sequence is PSPPPPPPQP. Positions 275–281 match the PxP motif 1 motif; it reads PQPSTER. Position 328 is a phosphoserine (Ser328). The disordered stretch occupies residues 343–413; that stretch reads FVQTEPFHPP…SRYHREIAPG (71 aa). A compositionally biased stretch (polar residues) spans 354 to 385; it reads QASSTQQDQGLLNRPSAFSTVQSSTAGNTLRN. Phosphoserine occurs at positions 394 and 443. Composition is skewed to polar residues over residues 458-467, 547-561, and 590-601; these read SQASVYTSAT, HQPTPHSSENNSNLS, and NYSSGEASSSWQ. Disordered regions lie at residues 458-494, 538-561, 590-690, and 747-796; these read SQASVYTSATEGRGFPASGLATESDGGNGSSQNNSGS, IESERPGPSHQPTPHSSENNSNLS, NYSS…DSLR, and RYQQ…NARM. Composition is skewed to low complexity over residues 602–614 and 628–639; these read VPSSFESVPSSGS and SSSRLELSSSAS. A phosphoserine mark is found at Ser635 and Ser639. Polar residues predominate over residues 661–674; the sequence is YTQSSRSGTVSQEA. At Arg747 the chain carries Asymmetric dimethylarginine. A compositionally biased stretch (acidic residues) spans 772-781; that stretch reads TDLEFEDFED. Ser1043 is subject to Phosphoserine; by IKKA. The LIR signature appears at 1043–1052; it reads SGVEYYWDQL. Polar residues predominate over residues 1060–1075; the sequence is HSNSRSSERPGTSRAT. A disordered region spans residues 1060-1079; that stretch reads HSNSRSSERPGTSRATWRTD. Short sequence motifs (TQT motif) lie at residues 1104–1106 and 1116–1118; these read TQT. Disordered stretches follow at residues 1112 to 1143, 1190 to 1214, and 1227 to 1298; these read QNAETQTEREVPEPGTAASGPGEGEGSEYGAS, RSSQTGTEPGAAHTSSPQPSTSRGL, and SPRT…PRNR. Residues 1191 to 1212 show a composition bias toward polar residues; sequence SSQTGTEPGAAHTSSPQPSTSR. Ser1205 is modified (phosphoserine). Residues 1206-1212 carry the PxP motif 2 motif; the sequence is PQPSTSR.

It belongs to the WD repeat AMBRA1 family. As to quaternary structure, component of the DCX(AMBRA1) E3 ubiquitin ligase complex, also named CRL4(AMBRA1), at least composed of CUL4 (CUL4A or CUL4B), DDB1, AMBRA1 and RBX1. Interacts with BECN1. Probably forms a complex with BECN1 and PIK3C3. Interacts with BECN2. Interacts with BCL2; leading to prevent interaction with BCN1 and autophagy, interaction is disrupted upon autophagy induction. Interacts with ULK1. Interacts (via PxP motifs) with PPP2CA; enhancing interaction between PPP2CA and MYC or FOXO3. Forms a complex with PPP2CA and BECN1; AMBRA1 and BECN1 components of the complex regulate MYC stability via different pathways. Interacts (TQT motifs) with DYNLL1 and DYNLL2; tethering AMBRA1 and the BECN1-PIK3C3 complex in absence of autophagy. Interacts with TRAF6; interaction is required to mediate 'Lys-63'-linked ubiquitination of ULK1. Interacts with TRIM32; promoting activation of ULK1 by TRIM32 via unanchored 'Lys-63'-linked polyubiquitin chains. Interacts with PRKN. Interacts (via LIR motif) with LC3 (MAP1LC3A, MAP1LC3B or MAP1LC3C). Interacts with HUWE1. Interacts with PTK2/FAK. Interacts with SRC; required for SRC trafficking to autophagosomes. In terms of processing, phosphorylation at Ser-52 by MTOR inhibits its ability to regulate autophagy and mediate ubiquitination of ULK1. Phosphorylation by ULK1 in response to autophagy induction abolishes interaction with DYNLL1 and DYNLL2, releasing AMBRA1 from the cytoskeletal docking site to induce autophagosome nucleation. Phosphorylation by MTOR inhibits interaction with PPP2CA and subsequent dephosphorylation of MYC. Phosphorylation at Ser-1043 by CHUK/IKKA promotes its interaction with ATG8 family proteins GABARAP and MAP1LC3B and its mitophagic activity. Post-translationally, ubiquitinated by RNF2 via 'Lys-48'-linkage in unstressed cells, leading to its degradation by the proteasome. Induction of autophagy promotes stabilization via interaction with CUL4 (CUL4A or CUL4B) and DDB1. Upon prolonged starvation, ubiquitinated and degraded, terminating the autophagy response. Undergoes proteolytic processing by caspase-6 (CASP6), caspase-7 (CASP7) and caspase-8 (CASP8) during apoptosis, resulting in the dismantling of the autophagic machinery and the accomplishment of the programmed cell death program. Also cleaved by calpains during apoptosis, which mediate a complete proteolytic degradation.

The protein localises to the endoplasmic reticulum. It is found in the cytoplasm. It localises to the cytoskeleton. Its subcellular location is the cytoplasmic vesicle. The protein resides in the autophagosome. The protein localises to the mitochondrion. It is found in the cytosol. It localises to the nucleus. Its subcellular location is the cell junction. The protein resides in the focal adhesion. It functions in the pathway protein modification; protein ubiquitination. Functionally, substrate-recognition component of a DCX (DDB1-CUL4-X-box) E3 ubiquitin-protein ligase complex involved in cell cycle control and autophagy. The DCX(AMBRA1) complex specifically mediates the polyubiquitination of target proteins such as BECN1, CCND1, CCND2, CCND3, ELOC and ULK1. Acts as an upstream master regulator of the transition from G1 to S cell phase: AMBRA1 specifically recognizes and binds phosphorylated cyclin-D (CCND1, CCND2 and CCND3), leading to cyclin-D ubiquitination by the DCX(AMBRA1) complex and subsequent degradation. By controlling the transition from G1 to S phase and cyclin-D degradation, AMBRA1 acts as a tumor suppressor that promotes genomic integrity during DNA replication and counteracts developmental abnormalities and tumor growth. AMBRA1 also regulates the cell cycle by promoting MYC dephosphorylation and degradation independently of the DCX(AMBRA1) complex: acts via interaction with the catalytic subunit of protein phosphatase 2A (PPP2CA), which enhances interaction between PPP2CA and MYC, leading to MYC dephosphorylation and degradation. Acts as a regulator of Cul5-RING (CRL5) E3 ubiquitin-protein ligase complexes by mediating ubiquitination and degradation of Elongin-C (ELOC) component of CRL5 complexes. Acts as a key regulator of autophagy by modulating the BECN1-PIK3C3 complex: controls protein turnover during neuronal development, and regulates normal cell survival and proliferation. In normal conditions, AMBRA1 is tethered to the cytoskeleton via interaction with dyneins DYNLL1 and DYNLL2. Upon autophagy induction, AMBRA1 is released from the cytoskeletal docking site to induce autophagosome nucleation by mediating ubiquitination of proteins involved in autophagy. The DCX(AMBRA1) complex mediates 'Lys-63'-linked ubiquitination of BECN1, increasing the association between BECN1 and PIK3C3 to promote PIK3C3 activity. In collaboration with TRAF6, AMBRA1 mediates 'Lys-63'-linked ubiquitination of ULK1 following autophagy induction, promoting ULK1 stability and kinase activity. Also activates ULK1 via interaction with TRIM32: TRIM32 stimulates ULK1 through unanchored 'Lys-63'-linked polyubiquitin chains. Also acts as an activator of mitophagy via interaction with PRKN and LC3 proteins (MAP1LC3A, MAP1LC3B or MAP1LC3C); possibly by bringing damaged mitochondria onto autophagosomes. Also activates mitophagy by acting as a cofactor for HUWE1; acts by promoting HUWE1-mediated ubiquitination of MFN2. AMBRA1 is also involved in regulatory T-cells (Treg) differentiation by promoting FOXO3 dephosphorylation independently of the DCX(AMBRA1) complex: acts via interaction with PPP2CA, which enhances interaction between PPP2CA and FOXO3, leading to FOXO3 dephosphorylation and stabilization. May act as a regulator of intracellular trafficking, regulating the localization of active PTK2/FAK and SRC. Also involved in transcription regulation by acting as a scaffold for protein complexes at chromatin. This is Activating molecule in BECN1-regulated autophagy protein 1 from Homo sapiens (Human).